A 2193-amino-acid polypeptide reads, in one-letter code: Genome polyprotein (2193 aa).

The interval 1 to 22 is disordered; that stretch reads MGSQVSTQRSGSHENSNSASEG. Gly-2 is lipidated: N-myristoyl glycine; by host. Over 2 to 1503 the chain is Cytoplasmic; sequence GSQVSTQRSG…HLNRAVLIMQ (1502 aa). Amphipathic alpha-helix stretches follow at residues 566 to 588 and 568 to 588; these read GDGIADMIDQAVTSRVGRALTSL and GIADMIDQAVTSRVGRALTSL. Residues His-883 and Asp-901 each act as for protease 2A activity in the active site. Positions 918 and 920 each coordinate Zn(2+). The active-site For protease 2A activity is Cys-972. Zn(2+) contacts are provided by Cys-978 and His-980. A membrane-binding region spans residues 1112–1184; it reads SASWLKKFND…EQSAASQEDL (73 aa). Positions 1112–1250 are oligomerization; the sequence is SASWLKKFND…SPGTGKSLAT (139 aa). The RNA-binding stretch occupies residues 1133–1137; that stretch reads SNKIS. Residues 1216-1374 enclose the SF3 helicase domain; sequence EKRMNNYMQF…YKTDLGRLDA (159 aa). 1240 to 1247 is an ATP binding site; that stretch reads GSPGTGKS. Zn(2+)-binding residues include Cys-1381, Cys-1392, and Cys-1397. Residues 1381–1397 form a C4-type; degenerate zinc finger; it reads CSENNTANFKRCSPLVC. Positions 1424–1431 are RNA-binding; it reads EYNNRYAI. Positions 1435–1440 are oligomerization; it reads IEALFQ. The stretch at 1504–1519 is an intramembrane region; that stretch reads SIATVVAVVSLVYVIY. The Cytoplasmic portion of the chain corresponds to 1520–2193; that stretch reads KLFAGFQGAY…NLRRNWLELF (674 aa). O-(5'-phospho-RNA)-tyrosine is present on Tyr-1529. The Peptidase C3 domain occupies 1549–1727; it reads GPSLDFALSL…FCAGLKRSYF (179 aa). Residues His-1588, Glu-1619, and Cys-1695 each act as for protease 3C activity in the active site. Residues 1958-2073 form the RdRp catalytic domain; sequence GSLFAFDYSG…ASYPFPIDCL (116 aa). Mg(2+)-binding residues include Asp-1964 and Asp-2060.

This sequence belongs to the picornaviruses polyprotein family. In terms of assembly, interacts with capsid protein VP1 and capsid protein VP3 to form heterotrimeric protomers. Interacts with capsid protein VP0, and capsid protein VP3 to form heterotrimeric protomers. Five protomers subsequently associate to form pentamers which serve as building blocks for the capsid. Interacts with capsid protein VP2, capsid protein VP3 and capsid protein VP4 following cleavage of capsid protein VP0. As to quaternary structure, interacts with capsid protein VP1 and capsid protein VP3 in the mature capsid. In terms of assembly, interacts with capsid protein VP0 and capsid protein VP1 to form heterotrimeric protomers. Five protomers subsequently associate to form pentamers which serve as building blocks for the capsid. Interacts with capsid protein VP4 in the mature capsid. Interacts with protein 2C; this interaction may be important for virion morphogenesis. Interacts with capsid protein VP1 and capsid protein VP3. As to quaternary structure, homodimer. In terms of assembly, homohexamer; forms a hexameric ring structure with 6-fold symmetry characteristic of AAA+ ATPases. Interacts (via N-terminus) with host RTN3 (via reticulon domain); this interaction is important for viral replication. Interacts with capsid protein VP3; this interaction may be important for virion morphogenesis. Interacts with protein 3CD. As to quaternary structure, homodimer. Interacts with host GBF1. Interacts (via GOLD domain) with host ACBD3 (via GOLD domain); this interaction allows the formation of a viral protein 3A/ACBD3 heterotetramer with a 2:2 stoichiometry, which will stimulate the recruitment of host PI4KB in order to synthesize PI4P at the viral RNA replication sites. In terms of assembly, interacts with RNA-directed RNA polymerase. Interacts with host IFIH1/MDA5; this interaction inhibits host IFIH1. As to quaternary structure, interacts with protein 3AB and with RNA-directed RNA polymerase. In terms of assembly, interacts with Viral protein genome-linked and with protein 3CD. It depends on Mg(2+) as a cofactor. In terms of processing, specific enzymatic cleavages in vivo by the viral proteases yield processing intermediates and the mature proteins. Post-translationally, myristoylation is required for the formation of pentamers during virus assembly. Further assembly of 12 pentamers and a molecule of genomic RNA generates the provirion. During virion maturation, immature virions are rendered infectious following cleavage of VP0 into VP4 and VP2. This maturation seems to be an autocatalytic event triggered by the presence of RNA in the capsid and it is followed by a conformational change infectious virion. In terms of processing, myristoylation is required during RNA encapsidation and formation of the mature virus particle. Post-translationally, VPg is uridylylated by the polymerase into VPg-pUpU. This acts as a nucleotide-peptide primer for the genomic RNA replication.

It is found in the virion. The protein resides in the host cytoplasm. The protein localises to the host cytoplasmic vesicle membrane. It localises to the host nucleus. The enzyme catalyses a ribonucleoside 5'-triphosphate + H2O = a ribonucleoside 5'-diphosphate + phosphate + H(+). It carries out the reaction Selective cleavage of Tyr-|-Gly bond in the picornavirus polyprotein.. The catalysed reaction is RNA(n) + a ribonucleoside 5'-triphosphate = RNA(n+1) + diphosphate. It catalyses the reaction Selective cleavage of Gln-|-Gly bond in the poliovirus polyprotein. In other picornavirus reactions Glu may be substituted for Gln, and Ser or Thr for Gly.. Replication or transcription is subject to high level of random mutations by the nucleotide analog ribavirin. Functionally, forms an icosahedral capsid of pseudo T=3 symmetry with capsid proteins VP2 and VP3. The capsid is 300 Angstroms in diameter, composed of 60 copies of each capsid protein and enclosing the viral positive strand RNA genome. Capsid protein VP1 mainly forms the vertices of the capsid. Capsid protein VP1 interacts with host cell receptor to provide virion attachment to target host cells. This attachment induces virion internalization. After binding to its receptor, the capsid undergoes conformational changes. Capsid protein VP1 N-terminus (that contains an amphipathic alpha-helix) and capsid protein VP4 are externalized. Together, they shape a pore in the host membrane through which viral genome is translocated to host cell cytoplasm. Its function is as follows. Forms an icosahedral capsid of pseudo T=3 symmetry with capsid proteins VP2 and VP3. The capsid is 300 Angstroms in diameter, composed of 60 copies of each capsid protein and enclosing the viral positive strand RNA genome. Lies on the inner surface of the capsid shell. After binding to the host receptor, the capsid undergoes conformational changes. Capsid protein VP4 is released, Capsid protein VP1 N-terminus is externalized, and together, they shape a pore in the host membrane through which the viral genome is translocated into the host cell cytoplasm. In terms of biological role, component of immature procapsids, which is cleaved into capsid proteins VP4 and VP2 after maturation. Allows the capsid to remain inactive before the maturation step. Functionally, cysteine protease that cleaves viral polyprotein and specific host proteins. It is responsible for the autocatalytic cleavage between the P1 and P2 regions, which is the first cleavage occurring in the polyprotein. Also cleaves the host translation initiation factor EIF4G1, in order to shut down the capped cellular mRNA translation. Inhibits the host nucleus-cytoplasm protein and RNA trafficking by cleaving host members of the nuclear pores. Counteracts stress granule formation probably by antagonizing its assembly or promoting its dissassembly. Cleaves and inhibits host IFIH1/MDA5, thereby inhibiting the type-I IFN production and the establishment of the antiviral state. Cleaves and inhibits host MAVS, thereby inhibiting the type-I IFN production and the establishment of the antiviral state. Its function is as follows. Plays an essential role in the virus replication cycle by acting as a viroporin. Creates a pore in the host endoplasmic reticulum and as a consequence releases Ca2+ in the cytoplasm of infected cell. In turn, high levels of cytoplasmic calcium may trigger membrane trafficking and transport of viral ER-associated proteins to viroplasms, sites of viral genome replication. Induces and associates with structural rearrangements of intracellular membranes. Displays RNA-binding, nucleotide binding and NTPase activities. May play a role in virion morphogenesis and viral RNA encapsidation by interacting with the capsid protein VP3. In terms of biological role, localizes the viral replication complex to the surface of membranous vesicles. Together with protein 3CD binds the Cis-Active RNA Element (CRE) which is involved in RNA synthesis initiation. Acts as a cofactor to stimulate the activity of 3D polymerase, maybe through a nucleid acid chaperone activity. Functionally, localizes the viral replication complex to the surface of membranous vesicles. It inhibits host cell endoplasmic reticulum-to-Golgi apparatus transport and causes the disassembly of the Golgi complex, possibly through GBF1 interaction. This would result in depletion of MHC, trail receptors and IFN receptors at the host cell surface. Plays an essential role in viral RNA replication by recruiting ACBD3 and PI4KB at the viral replication sites, thereby allowing the formation of the rearranged membranous structures where viral replication takes place. Its function is as follows. Acts as a primer for viral RNA replication and remains covalently bound to viral genomic RNA. VPg is uridylylated prior to priming replication into VPg-pUpU. The oriI viral genomic sequence may act as a template for this. The VPg-pUpU is then used as primer on the genomic RNA poly(A) by the RNA-dependent RNA polymerase to replicate the viral genome. During genome replication, the VPg-RNA linkage is removed by the host TDP2, thereby accelerating replication. During the late stage of the replication cycle, host TDP2 is excluded from sites of viral RNA synthesis and encapsidation, allowing for the generation of progeny virions. Involved in the viral replication complex and viral polypeptide maturation. It exhibits protease activity with a specificity and catalytic efficiency that is different from protease 3C. Protein 3CD lacks polymerase activity. Protein 3CD binds to the 5'UTR of the viral genome. In terms of biological role, major viral protease that mediates proteolytic processing of the polyprotein. Cleaves host EIF5B, contributing to host translation shutoff. Also cleaves host PABPC1, contributing to host translation shutoff. Binds and inhibits host IFIH1/MDA5, thereby inhibiting the type-I IFN production and the establishment of the antiviral state. Cleaves host MAP3K7/TAK1, resulting in inhibition of TRAF6-triggered NF-kappa-B induction. Cleaves host NLRP1, triggers host N-glycine-mediated degradation of the autoinhibitory NLRP1 N-terminal fragment. Functionally, replicates the viral genomic RNA on the surface of intracellular membranes. May form linear arrays of subunits that propagate along a strong head-to-tail interaction called interface-I. Covalently attaches UMP to a tyrosine of VPg, which is used to prime RNA synthesis. The positive stranded RNA genome is first replicated at virus induced membranous vesicles, creating a dsRNA genomic replication form. This dsRNA is then used as template to synthesize positive stranded RNA genomes. ss(+)RNA genomes are either translated, replicated or encapsidated. This Homo sapiens (Human) protein is Genome polyprotein.